A 431-amino-acid polypeptide reads, in one-letter code: tRNA(Ile)-lysidine synthase (431 aa).

Residue 25-30 (SGGLDS) coordinates ATP.

The protein belongs to the tRNA(Ile)-lysidine synthase family.

Its subcellular location is the cytoplasm. The enzyme catalyses cytidine(34) in tRNA(Ile2) + L-lysine + ATP = lysidine(34) in tRNA(Ile2) + AMP + diphosphate + H(+). In terms of biological role, ligates lysine onto the cytidine present at position 34 of the AUA codon-specific tRNA(Ile) that contains the anticodon CAU, in an ATP-dependent manner. Cytidine is converted to lysidine, thus changing the amino acid specificity of the tRNA from methionine to isoleucine. The protein is tRNA(Ile)-lysidine synthase of Legionella pneumophila (strain Lens).